Consider the following 280-residue polypeptide: 4-diphosphocytidyl-2-C-methyl-D-erythritol kinase (280 aa).

Residue Lys-11 is part of the active site. 95 to 105 serves as a coordination point for ATP; that stretch reads PVGAGLGGGSS. Asp-137 is a catalytic residue.

It belongs to the GHMP kinase family. IspE subfamily.

The enzyme catalyses 4-CDP-2-C-methyl-D-erythritol + ATP = 4-CDP-2-C-methyl-D-erythritol 2-phosphate + ADP + H(+). The protein operates within isoprenoid biosynthesis; isopentenyl diphosphate biosynthesis via DXP pathway; isopentenyl diphosphate from 1-deoxy-D-xylulose 5-phosphate: step 3/6. In terms of biological role, catalyzes the phosphorylation of the position 2 hydroxy group of 4-diphosphocytidyl-2C-methyl-D-erythritol. The polypeptide is 4-diphosphocytidyl-2-C-methyl-D-erythritol kinase (Citrifermentans bemidjiense (strain ATCC BAA-1014 / DSM 16622 / JCM 12645 / Bem) (Geobacter bemidjiensis)).